The primary structure comprises 191 residues: ATP-dependent Clp protease proteolytic subunit 1 (191 aa).

The active-site Nucleophile is the S91. Residue H116 is part of the active site.

This sequence belongs to the peptidase S14 family. In terms of assembly, fourteen ClpP subunits assemble into 2 heptameric rings which stack back to back to give a disk-like structure with a central cavity, resembling the structure of eukaryotic proteasomes.

It is found in the cytoplasm. It carries out the reaction Hydrolysis of proteins to small peptides in the presence of ATP and magnesium. alpha-casein is the usual test substrate. In the absence of ATP, only oligopeptides shorter than five residues are hydrolyzed (such as succinyl-Leu-Tyr-|-NHMec, and Leu-Tyr-Leu-|-Tyr-Trp, in which cleavage of the -Tyr-|-Leu- and -Tyr-|-Trp bonds also occurs).. Its function is as follows. Cleaves peptides in various proteins in a process that requires ATP hydrolysis. Has a chymotrypsin-like activity. Plays a major role in the degradation of misfolded proteins. The chain is ATP-dependent Clp protease proteolytic subunit 1 from Chlamydia caviae (strain ATCC VR-813 / DSM 19441 / 03DC25 / GPIC) (Chlamydophila caviae).